A 95-amino-acid chain; its full sequence is Large ribosomal subunit protein eL37y (95 aa).

Residues Cys19, Cys22, Cys34, and Cys37 each coordinate Zn(2+). The C4-type zinc finger occupies Cys19–Cys37.

This sequence belongs to the eukaryotic ribosomal protein eL37 family. It depends on Zn(2+) as a cofactor.

Binds to the 23S rRNA. The polypeptide is Large ribosomal subunit protein eL37y (RPL37B) (Arabidopsis thaliana (Mouse-ear cress)).